We begin with the raw amino-acid sequence, 701 residues long: Elongation factor G (701 aa).

Positions 8–290 (SRYRNIGISA…AVIEYLPAPT (283 aa)) constitute a tr-type G domain. GTP is bound by residues 17–24 (AHIDAGKT), 88–92 (DTPGH), and 142–145 (NKMD).

This sequence belongs to the TRAFAC class translation factor GTPase superfamily. Classic translation factor GTPase family. EF-G/EF-2 subfamily.

It is found in the cytoplasm. In terms of biological role, catalyzes the GTP-dependent ribosomal translocation step during translation elongation. During this step, the ribosome changes from the pre-translocational (PRE) to the post-translocational (POST) state as the newly formed A-site-bound peptidyl-tRNA and P-site-bound deacylated tRNA move to the P and E sites, respectively. Catalyzes the coordinated movement of the two tRNA molecules, the mRNA and conformational changes in the ribosome. This chain is Elongation factor G, found in Actinobacillus pleuropneumoniae serotype 5b (strain L20).